Here is a 502-residue protein sequence, read N- to C-terminus: MTEKKYIVALDQGTTSSRAVVMDHDANIISVSQREFEQIYPKPGWVEHDPMEIWATQSSTLVEVLAKADISSDQIAAIGITNQRETTIVWEKETGKPIYNAIVWQCRRTAEICEHLKRDGMEEYIRNNTGLVIDPYFSGTKVKWILDHVEGSRERAKRGELLFGTVDTWLIWKMTQGRVHVTDYTNASRTMLFNIHTLDWDDKMLEVLDIPREMLPEVRRSSEVYGQTNIGGKGGTRIPISGIAGDQQAALFGQLCVKEGMAKNTYGTGCFMLMNTGEKAVKSENGLLTTIACGPTGEVNYALEGAVFMAGASIQWLRDEMKLINDAYDSEYFATKVQNTNGVYVVPAFTGLGAPYWDPYARGAIFGLTRGVNANHIIRATLESIAYQTRDVLEAMQADSGIRLHALRVDGGAVANNFLMQFQSDILGTRVERPEVREVTALGAAYLAGLAVGFWQNLDELQEKAVIEREFRPGIETTERNYRYAGWKKAVKRAMAWEEHDE.

Position 14 (Thr-14) interacts with ADP. ATP-binding residues include Thr-14, Thr-15, and Ser-16. Thr-14 lines the sn-glycerol 3-phosphate pocket. Arg-18 lines the ADP pocket. The sn-glycerol 3-phosphate site is built by Arg-84, Glu-85, Tyr-136, and Asp-246. Positions 84, 85, 136, 246, and 247 each coordinate glycerol. ADP is bound by residues Thr-268 and Gly-311. ATP-binding residues include Thr-268, Gly-311, Gln-315, and Gly-412. Residues Gly-412 and Asn-416 each contribute to the ADP site.

The protein belongs to the FGGY kinase family. In terms of assembly, homotetramer and homodimer (in equilibrium). Heterodimer with EIIA-Glc. Binds 1 zinc ion per glycerol kinase EIIA-Glc dimer. The zinc ion is important for dimerization.

The enzyme catalyses glycerol + ATP = sn-glycerol 3-phosphate + ADP + H(+). It participates in polyol metabolism; glycerol degradation via glycerol kinase pathway; sn-glycerol 3-phosphate from glycerol: step 1/1. Its activity is regulated as follows. Activity of this regulatory enzyme is affected by several metabolites. Allosterically and non-competitively inhibited by fructose 1,6-bisphosphate (FBP) and unphosphorylated phosphocarrier protein EIIA-Glc (III-Glc), an integral component of the bacterial phosphotransferase (PTS) system. In terms of biological role, key enzyme in the regulation of glycerol uptake and metabolism. Catalyzes the phosphorylation of glycerol to yield sn-glycerol 3-phosphate. This chain is Glycerol kinase, found in Escherichia fergusonii (strain ATCC 35469 / DSM 13698 / CCUG 18766 / IAM 14443 / JCM 21226 / LMG 7866 / NBRC 102419 / NCTC 12128 / CDC 0568-73).